The sequence spans 393 residues: MGRLTSGVGTAALLVVAVGLRVVCAKYALADPSLKMADPNRFRGKNLPVLDQLTDPPGVKRVYHIQPSLEDPFQPPSIPITVYYAVLERACRSVLLHAPSEAPQIVRGASDEARKHTYNLTIAWYRMGDNCAIPITVMEYTECPYNKSLGVCPIRTQPRWSYYDSFSAVSEDNLGFLMHAPAFETAGTYLRLVKINDWTEITQFILEHRARASCKYALPLRIPPAACLTSKAYQQGVTVDSIGMLPRFIPENQRTVALYSLKIAGWHGPKPPYTSTLLPPELSDTTNATQPELVPEDPEDSALLEDPAGTVSSQIPPNWHIPSIQDVAPHHAPAAPSNPGLIIGALAGSTLAVLVIGGIAFWVRRRAQMAPKRLRLPHIRDDDAPPSHQPLFY.

Positions 1–25 are cleaved as a signal peptide; it reads MGRLTSGVGTAALLVVAVGLRVVCA. Positions 25–57 are interaction with TNFRSF14; sequence AKYALADPSLKMADPNRFRGKNLPVLDQLTDPP. Residues 26 to 340 lie on the Virion surface side of the membrane; the sequence is KYALADPSLK…HAPAAPSNPG (315 aa). His64 contributes to the Zn(2+) binding site. Cystine bridges form between Cys91/Cys214, Cys131/Cys227, and Cys143/Cys152. Asn119 and Asn146 each carry an N-linked (GlcNAc...) asparagine; by host glycan. Position 240 (Asp240) interacts with Zn(2+). The profusion stretch occupies residues 261–305; it reads LKIAGWHGPKPPYTSTLLPPELSDTTNATQPELVPEDPEDSALLE. Residues 274–290 are compositionally biased toward polar residues; the sequence is TSTLLPPELSDTTNATQ. A disordered region spans residues 274 to 301; sequence TSTLLPPELSDTTNATQPELVPEDPEDS. A glycan (N-linked (GlcNAc...) asparagine; by host) is linked at Asn287. A helical membrane pass occupies residues 341–361; sequence LIIGALAGSTLAVLVIGGIAF. The Intravirion segment spans residues 362–393; the sequence is WVRRRAQMAPKRLRLPHIRDDDAPPSHQPLFY.

Belongs to the herpesviridae glycoprotein D family. Homodimer. Interacts with host receptor TNFRSF14. Interacts with host receptor NECTIN1. Interacts with host receptor NECTIN2. Interacts (via profusion domain) with gB; this interaction occurs in the absence of gH/gL. Interacts (via profusion domain) with gH/gL heterodimer; this interaction occurs in the absence of gB. Associates with the gB-gH/gL-gD complex. Interacts (via C-terminus) with UL11 tegument protein.

It is found in the virion membrane. In terms of biological role, envelope glycoprotein that binds to the host cell entry receptors NECTIN1 and TNFRSF14/HVEM, promoting the virus entry into host cells. May trigger fusion with host membrane, by recruiting the fusion machinery composed of gB and gH/gL. The protein is Envelope glycoprotein D (gD) of Human herpesvirus 2 (strain HG52) (HHV-2).